The following is a 493-amino-acid chain: Glutamate--tRNA ligase (493 aa).

The 'HIGH' region motif lies at 10 to 20 (PSPTGTPHVGL). A 'KMSKS' region motif is present at residues 254 to 258 (KLSKR). Lys-257 provides a ligand contact to ATP.

This sequence belongs to the class-I aminoacyl-tRNA synthetase family. Glutamate--tRNA ligase type 1 subfamily. As to quaternary structure, monomer.

It localises to the cytoplasm. It carries out the reaction tRNA(Glu) + L-glutamate + ATP = L-glutamyl-tRNA(Glu) + AMP + diphosphate. Functionally, catalyzes the attachment of glutamate to tRNA(Glu) in a two-step reaction: glutamate is first activated by ATP to form Glu-AMP and then transferred to the acceptor end of tRNA(Glu). This is Glutamate--tRNA ligase from Corynebacterium efficiens (strain DSM 44549 / YS-314 / AJ 12310 / JCM 11189 / NBRC 100395).